Reading from the N-terminus, the 534-residue chain is uncharacterized protein (534 aa).

Transmembrane regions (helical) follow at residues 4–22, 24–46, 56–75, 82–104, and 134–156; these read ILVL…RVSF, GISL…GWTI, ALFV…RGLA, AITG…RLLG, and PAAV…VLFV. A disordered region spans residues 167-187; the sequence is GDSDGTDSASETSGQSSAEIA. A compositionally biased stretch (polar residues) spans 172–187; the sequence is TDSASETSGQSSAEIA. RCK C-terminal domains are found at residues 180-264 and 265-349; these read GQSS…TLGE and LQDT…AVGH. Helical transmembrane passes span 359–378, 382–401, 408–430, 445–467, 479–501, and 511–533; these read LLSL…LSLQ, FSMS…ILGH, IRGS…LFLA, MERG…LVGF, WQSL…LTGA, and YVAA…VELI.

Belongs to the AAE transporter (TC 2.A.81) family.

It is found in the cell membrane. This is an uncharacterized protein from Rhodopirellula baltica (strain DSM 10527 / NCIMB 13988 / SH1).